The primary structure comprises 438 residues: Probable D-serine dehydratase (438 aa).

At Lys114 the chain carries N6-(pyridoxal phosphate)lysine.

It belongs to the serine/threonine dehydratase family. DsdA subfamily. The cofactor is pyridoxal 5'-phosphate.

It carries out the reaction D-serine = pyruvate + NH4(+). The protein is Probable D-serine dehydratase of Histophilus somni (strain 2336) (Haemophilus somnus).